We begin with the raw amino-acid sequence, 248 residues long: DNA repair protein RecO (248 aa).

The protein belongs to the RecO family.

Involved in DNA repair and RecF pathway recombination. This Bradyrhizobium sp. (strain ORS 278) protein is DNA repair protein RecO.